We begin with the raw amino-acid sequence, 140 residues long: Nucleoside diphosphate kinase (140 aa).

ATP contacts are provided by Lys-11, Phe-59, Arg-87, Thr-93, Arg-104, and Asn-114. The active-site Pros-phosphohistidine intermediate is the His-117.

The protein belongs to the NDK family. In terms of assembly, homotetramer. The cofactor is Mg(2+).

The protein resides in the cytoplasm. It carries out the reaction a 2'-deoxyribonucleoside 5'-diphosphate + ATP = a 2'-deoxyribonucleoside 5'-triphosphate + ADP. It catalyses the reaction a ribonucleoside 5'-diphosphate + ATP = a ribonucleoside 5'-triphosphate + ADP. Major role in the synthesis of nucleoside triphosphates other than ATP. The ATP gamma phosphate is transferred to the NDP beta phosphate via a ping-pong mechanism, using a phosphorylated active-site intermediate. The polypeptide is Nucleoside diphosphate kinase (Francisella tularensis subsp. mediasiatica (strain FSC147)).